The chain runs to 80 residues: NAD(P)H-quinone oxidoreductase subunit O (80 aa).

The protein belongs to the complex I NdhO subunit family. In terms of assembly, NDH-1 can be composed of about 15 different subunits; different subcomplexes with different compositions have been identified which probably have different functions.

The protein resides in the cellular thylakoid membrane. It carries out the reaction a plastoquinone + NADH + (n+1) H(+)(in) = a plastoquinol + NAD(+) + n H(+)(out). The catalysed reaction is a plastoquinone + NADPH + (n+1) H(+)(in) = a plastoquinol + NADP(+) + n H(+)(out). Its function is as follows. NDH-1 shuttles electrons from an unknown electron donor, via FMN and iron-sulfur (Fe-S) centers, to quinones in the respiratory and/or the photosynthetic chain. The immediate electron acceptor for the enzyme in this species is believed to be plastoquinone. Couples the redox reaction to proton translocation, and thus conserves the redox energy in a proton gradient. Cyanobacterial NDH-1 also plays a role in inorganic carbon-concentration. The sequence is that of NAD(P)H-quinone oxidoreductase subunit O from Prochlorococcus marinus subsp. pastoris (strain CCMP1986 / NIES-2087 / MED4).